Consider the following 189-residue polypeptide: Transcription factor FapR (189 aa).

This sequence belongs to the FapR family.

In terms of biological role, transcriptional factor involved in regulation of membrane lipid biosynthesis by repressing genes involved in fatty acid and phospholipid metabolism. The sequence is that of Transcription factor FapR from Listeria monocytogenes serotype 4b (strain CLIP80459).